We begin with the raw amino-acid sequence, 72 residues long: DNA-directed RNA polymerase subunit Rpo10 (72 aa).

4 residues coordinate Zn(2+): Cys7, Cys10, Cys53, and Cys54.

This sequence belongs to the archaeal Rpo10/eukaryotic RPB10 RNA polymerase subunit family. In terms of assembly, part of the RNA polymerase complex. Requires Zn(2+) as cofactor.

The protein localises to the cytoplasm. The enzyme catalyses RNA(n) + a ribonucleoside 5'-triphosphate = RNA(n+1) + diphosphate. DNA-dependent RNA polymerase (RNAP) catalyzes the transcription of DNA into RNA using the four ribonucleoside triphosphates as substrates. The chain is DNA-directed RNA polymerase subunit Rpo10 from Thermoplasma volcanium (strain ATCC 51530 / DSM 4299 / JCM 9571 / NBRC 15438 / GSS1).